We begin with the raw amino-acid sequence, 115 residues long: NADH-ubiquinone oxidoreductase chain 3 (115 aa).

Helical transmembrane passes span 4-24 (MLAM…AFWL), 55-75 (FFLV…LLPL), and 84-104 (MITT…GLSY).

It belongs to the complex I subunit 3 family. Core subunit of respiratory chain NADH dehydrogenase (Complex I) which is composed of 45 different subunits. Interacts with TMEM186. Interacts with TMEM242.

It is found in the mitochondrion inner membrane. The catalysed reaction is a ubiquinone + NADH + 5 H(+)(in) = a ubiquinol + NAD(+) + 4 H(+)(out). Core subunit of the mitochondrial membrane respiratory chain NADH dehydrogenase (Complex I) which catalyzes electron transfer from NADH through the respiratory chain, using ubiquinone as an electron acceptor. Essential for the catalytic activity of complex I. The protein is NADH-ubiquinone oxidoreductase chain 3 of Reithrodon auritus (Bunny rat).